Consider the following 38-residue polypeptide: Cytochrome b559 subunit beta (38 aa).

The helical transmembrane segment at 13 to 29 threads the bilayer; that stretch reads WLAVHALAVPTVFFLGS. His17 is a binding site for heme.

The protein belongs to the PsbE/PsbF family. In terms of assembly, heterodimer of an alpha subunit and a beta subunit. PSII is composed of 1 copy each of membrane proteins PsbA, PsbB, PsbC, PsbD, PsbE, PsbF, PsbH, PsbI, PsbJ, PsbK, PsbL, PsbM, PsbT, PsbX, PsbY, PsbZ, Psb30/Ycf12, at least 3 peripheral proteins of the oxygen-evolving complex and a large number of cofactors. It forms dimeric complexes. Requires heme b as cofactor.

Its subcellular location is the plastid. It is found in the chloroplast thylakoid membrane. Its function is as follows. This b-type cytochrome is tightly associated with the reaction center of photosystem II (PSII). PSII is a light-driven water:plastoquinone oxidoreductase that uses light energy to abstract electrons from H(2)O, generating O(2) and a proton gradient subsequently used for ATP formation. It consists of a core antenna complex that captures photons, and an electron transfer chain that converts photonic excitation into a charge separation. The protein is Cytochrome b559 subunit beta of Ostreococcus tauri.